The primary structure comprises 111 residues: Tubulin beta chain (111 aa).

The segment at 82-111 (SEYQQYQDATAEDEGEFDEEEAEGEGQEYA) is disordered. Residues 91–111 (TAEDEGEFDEEEAEGEGQEYA) are compositionally biased toward acidic residues.

It belongs to the tubulin family. In terms of assembly, dimer of alpha and beta chains. A typical microtubule is a hollow water-filled tube with an outer diameter of 25 nm and an inner diameter of 15 nM. Alpha-beta heterodimers associate head-to-tail to form protofilaments running lengthwise along the microtubule wall with the beta-tubulin subunit facing the microtubule plus end conferring a structural polarity. Microtubules usually have 13 protofilaments but different protofilament numbers can be found in some organisms and specialized cells. Mg(2+) is required as a cofactor.

The protein resides in the cytoplasm. It localises to the cytoskeleton. In terms of biological role, tubulin is the major constituent of microtubules, a cylinder consisting of laterally associated linear protofilaments composed of alpha- and beta-tubulin heterodimers. Microtubules grow by the addition of GTP-tubulin dimers to the microtubule end, where a stabilizing cap forms. Below the cap, tubulin dimers are in GDP-bound state, owing to GTPase activity of alpha-tubulin. This chain is Tubulin beta chain, found in Lymnaea stagnalis (Great pond snail).